The primary structure comprises 174 residues: ATP-dependent protease subunit HslV (174 aa).

The active site involves Thr2. Na(+)-binding residues include Gly157, Asp160, and Thr163.

The protein belongs to the peptidase T1B family. HslV subfamily. A double ring-shaped homohexamer of HslV is capped on each side by a ring-shaped HslU homohexamer. The assembly of the HslU/HslV complex is dependent on binding of ATP.

Its subcellular location is the cytoplasm. It carries out the reaction ATP-dependent cleavage of peptide bonds with broad specificity.. With respect to regulation, allosterically activated by HslU binding. Its function is as follows. Protease subunit of a proteasome-like degradation complex believed to be a general protein degrading machinery. This is ATP-dependent protease subunit HslV from Aliivibrio fischeri (strain MJ11) (Vibrio fischeri).